A 143-amino-acid polypeptide reads, in one-letter code: Large ribosomal subunit protein uL11 (143 aa).

This sequence belongs to the universal ribosomal protein uL11 family. In terms of assembly, part of the ribosomal stalk of the 50S ribosomal subunit. Interacts with L10 and the large rRNA to form the base of the stalk. L10 forms an elongated spine to which L12 dimers bind in a sequential fashion forming a multimeric L10(L12)X complex. In terms of processing, one or more lysine residues are methylated.

Functionally, forms part of the ribosomal stalk which helps the ribosome interact with GTP-bound translation factors. This is Large ribosomal subunit protein uL11 from Bordetella pertussis (strain Tohama I / ATCC BAA-589 / NCTC 13251).